Reading from the N-terminus, the 407-residue chain is Protein ORF45 (407 aa).

Residues 1–10 are compositionally biased toward polar residues; sequence MAMFVRTSSS. Disordered stretches follow at residues 1-183, 196-318, and 332-407; these read MAMF…SDDE, GTGA…QRQP, and SSGS…PWLD. S41 is modified (phosphoserine; by host TBK1 and IKKE). The segment covering 91–115 has biased composition (acidic residues); that stretch reads SEYDEDEEDEDEEENDDVQEEDEPE. Positions 128–139 are enriched in basic residues; that stretch reads LRPRPLARRAHT. S162 carries the post-translational modification Phosphoserine; by host TBK1 and IKKE. Over residues 205–218 the composition is skewed to polar residues; it reads ASRNSVPGTQSSPY. Residues 284-294 carry the Nuclear export signal motif; sequence VLSQRIGLMDV. The Nuclear localization signal motif lies at 297–300; the sequence is KRKR. Composition is skewed to low complexity over residues 342-353 and 360-383; these read SSAVSVIVSPSS and TQSP…SRCS.

In terms of assembly, interacts with host IRF7. Interacts with host RPS6KA1. Interacts with host RAB11FIP5; this interaction results in the lysosomal degradation of ORF45 and the inhibition of viral particle release. Interacts with host p53/TP53; this interaction down-regulates p53/TP53 signaling pathway. Interacts with the N-terminal part of host NLRP1; relieving autoinhibition of the NLRP1 inflammasome. Phosphorylated on Ser-41 and Ser-162 by host IKBKE and TBK1.

The protein resides in the virion tegument. It is found in the host cytoplasm. Its subcellular location is the host nucleus. The protein localises to the host Golgi apparatus. Prevents the establishment of cellular antiviral state by blocking virus-induced phosphorylation and activation of host interferon regulatory factor 7/IRF7, a transcription factor critical for the induction of interferons alpha and beta. Mechanistically, ORF45 competes with the associated IRF7 and inhibits its phosphorylation by IKBKE or TBK1 by acting as an alternative substrate. Acts as an activator of the NLRP1 inflammasome via interaction with the N-terminal part of host NLRP1: interaction promotes translocation of the N-terminal part of NLRP1 into the nucleus, relieving autoinhibition of the NLRP1 inflammasome and leading to its activation. Also plays a role in promoting the late transcription and translation of viral lytic genes by constitutively activating host extracellular signal-regulated kinase (ERK)-p90 ribosomal S6 kinase/RPS6KA1. In addition, supports the viral replication cycle by modulating host p53/TP53 signaling pathway. Interacts with host p53/TP53 and prevents its interaction with the deubiquitinase USP7, leading to sequestration of P53/TP53 in the host cytoplasm thereby diminishing its transcriptional activity. The polypeptide is Protein ORF45 (ORF45) (Homo sapiens (Human)).